The following is a 93-amino-acid chain: Small ribosomal subunit protein bS20 (93 aa).

Belongs to the bacterial ribosomal protein bS20 family.

Its function is as follows. Binds directly to 16S ribosomal RNA. The protein is Small ribosomal subunit protein bS20 of Dictyoglomus thermophilum (strain ATCC 35947 / DSM 3960 / H-6-12).